The sequence spans 384 residues: MYCIGLISGTSVDGIDAALIEISGTELDLKIDLISGKTYPYPPELRGKIIEICGGKPISIEELAQIDDAIAQSFAQAAIMVQNGHPHAQLIGSHGQTVFHRPPVLGEREIKLGYSLQLGRGSMIAHLTGIPTVSNFRAADIAAGGQAAPLVPKVDAYLLSHPTHHRCVQNIGGIGNVTYLPPNQKPNWEQAVRGWDTGPGNVLIDLAIQKLTNGQQTYDNNGQWAAQGTPCESLVRKWLEQEFFQQTPPKSTGRELFSPAYLEQCWQDAQPYHLSDSDWLATLTELTAASIAQSYQQFIKAPIDEILVCGGGSRNTYLKQRLANYLPNSQILTTDDLGISSDFKEAIAFGVLAYWRLVCGITGNLPQVTGAKQAMLLGDIDHPV.

An ATP-binding site is contributed by 9 to 16 (GTSVDGID).

It belongs to the anhydro-N-acetylmuramic acid kinase family.

It carries out the reaction 1,6-anhydro-N-acetyl-beta-muramate + ATP + H2O = N-acetyl-D-muramate 6-phosphate + ADP + H(+). It functions in the pathway amino-sugar metabolism; 1,6-anhydro-N-acetylmuramate degradation. Its pathway is cell wall biogenesis; peptidoglycan recycling. Functionally, catalyzes the specific phosphorylation of 1,6-anhydro-N-acetylmuramic acid (anhMurNAc) with the simultaneous cleavage of the 1,6-anhydro ring, generating MurNAc-6-P. Is required for the utilization of anhMurNAc either imported from the medium or derived from its own cell wall murein, and thus plays a role in cell wall recycling. The chain is Anhydro-N-acetylmuramic acid kinase from Rippkaea orientalis (strain PCC 8801 / RF-1) (Cyanothece sp. (strain PCC 8801)).